A 386-amino-acid chain; its full sequence is MYVRHLALTDFRSWARVELELEPGRTVFVGSNGFGKTNLIEALWYSATLGSHRVASDAPLIRAGAERAVVSTIVVNDGRELAVDLDITSGRANKARLNRSPVRSAREILGVLRAVLFAPEDLALVRGDPGERRRYLDELATTRRPRIAAVRADYDKVVRQRTALLKTASGARYRGDRGALETLDVWNGHLASHGAQLISARVQLVNELAPEVEKAYQLLAPGSRPAAIRYRSGVDVVEAEAAAGNSDEEMFEAALLDALSRRRDAELERGVCLVGPHRDDLELRLGDQVAKGFASHGESWSMALALRLAAYELLRVEGSDPVLLLDDVFAELDSARRQALAQVAATAEQVLVTAAVEEDIPAEWDARRIGITMQDSDGGRISVVRT.

30–37 (GSNGFGKT) is an ATP binding site.

The protein belongs to the RecF family.

The protein localises to the cytoplasm. Its function is as follows. The RecF protein is involved in DNA metabolism; it is required for DNA replication and normal SOS inducibility. RecF binds preferentially to single-stranded, linear DNA. It also seems to bind ATP. This is DNA replication and repair protein RecF from Mycolicibacterium vanbaalenii (strain DSM 7251 / JCM 13017 / BCRC 16820 / KCTC 9966 / NRRL B-24157 / PYR-1) (Mycobacterium vanbaalenii).